Here is an 85-residue protein sequence, read N- to C-terminus: UPF0181 protein YE1782 (85 aa).

Disordered stretches follow at residues 1-22 (MLAG…RIHQ) and 57-85 (DTDF…PYEG). Over residues 9-21 (SHEEQQEAVERIH) the composition is skewed to basic and acidic residues. Residues 74 to 85 (QDADEIEDPYEG) are compositionally biased toward acidic residues.

Belongs to the UPF0181 family.

The polypeptide is UPF0181 protein YE1782 (Yersinia enterocolitica serotype O:8 / biotype 1B (strain NCTC 13174 / 8081)).